A 258-amino-acid chain; its full sequence is Imidazole glycerol phosphate synthase subunit HisF (258 aa).

Catalysis depends on residues Asp11 and Asp130.

Belongs to the HisA/HisF family. In terms of assembly, heterodimer of HisH and HisF.

The protein resides in the cytoplasm. The catalysed reaction is 5-[(5-phospho-1-deoxy-D-ribulos-1-ylimino)methylamino]-1-(5-phospho-beta-D-ribosyl)imidazole-4-carboxamide + L-glutamine = D-erythro-1-(imidazol-4-yl)glycerol 3-phosphate + 5-amino-1-(5-phospho-beta-D-ribosyl)imidazole-4-carboxamide + L-glutamate + H(+). It participates in amino-acid biosynthesis; L-histidine biosynthesis; L-histidine from 5-phospho-alpha-D-ribose 1-diphosphate: step 5/9. Its function is as follows. IGPS catalyzes the conversion of PRFAR and glutamine to IGP, AICAR and glutamate. The HisF subunit catalyzes the cyclization activity that produces IGP and AICAR from PRFAR using the ammonia provided by the HisH subunit. This is Imidazole glycerol phosphate synthase subunit HisF from Bradyrhizobium sp. (strain ORS 278).